Reading from the N-terminus, the 166-residue chain is Stress response protein NhaX (166 aa).

This sequence belongs to the universal stress protein A family.

The sequence is that of Stress response protein NhaX (nhaX) from Bacillus subtilis (strain 168).